Consider the following 440-residue polypeptide: 6-phospho-alpha-glucosidase (440 aa).

Phe-4 to Asp-70 serves as a coordination point for NAD(+). Residues Arg-93 and Asn-147 each contribute to the substrate site. Cys-169 contributes to the Mn(2+) binding site. Asp-170 serves as the catalytic Proton donor. His-200 is a Mn(2+) binding site. The active-site Proton acceptor is the Tyr-263. Residue Arg-283 participates in substrate binding.

As to quaternary structure, homodimer. It depends on NAD(+) as a cofactor. Mn(2+) is required as a cofactor. The cofactor is Co(2+). Requires Ni(2+) as cofactor.

It catalyses the reaction alpha-maltose 6'-phosphate + H2O = D-glucose 6-phosphate + D-glucose. Its pathway is glycan biosynthesis; sucrose metabolism. In terms of biological role, is involved in the catabolism of alpha-glycosides accumulated via a phosphoenolpyruvate-dependent phosphotransferase system (PEP-PTS). Hydrolyzes a wide variety of 6-phospho-alpha-D-glucosides including maltose-6'-phosphate, isomaltose-6'-phosphate, maltitol-6-phosphate, trehalose-6-phosphate and the 6'-phosphorylated derivatives of the five linkage-isomeric alpha-D-glucosyl-D-fructoses: trehalulose-6'-phosphate, turanose-6'-phosphate, maltulose-6'-phosphate, leucrose-6'-phosphate, and palatinose-6'-phosphate. However, sucrose-6-phosphate is not a substrate for this enzyme. The polypeptide is 6-phospho-alpha-glucosidase (Klebsiella pneumoniae).